Here is a 138-residue protein sequence, read N- to C-terminus: Large ribosomal subunit protein uL16 (138 aa).

Over residues 1 to 19 (MLIPKRVKYRRQHRPHRSG) the composition is skewed to basic residues. The tract at residues 1-24 (MLIPKRVKYRRQHRPHRSGVSKGG) is disordered.

It belongs to the universal ribosomal protein uL16 family. Part of the 50S ribosomal subunit.

In terms of biological role, binds 23S rRNA and is also seen to make contacts with the A and possibly P site tRNAs. This is Large ribosomal subunit protein uL16 from Corynebacterium jeikeium (strain K411).